Here is a 41-residue protein sequence, read N- to C-terminus: Competence-stimulating peptide type 1 (41 aa).

Positions 1-24 (MKNTVKLEQFVALKEKDLQKIKGG) are excised as a propeptide.

Belongs to the ComC family.

Its subcellular location is the secreted. Acts as a pheromone, induces cells to develop competence for genetic transformation. The sequence is that of Competence-stimulating peptide type 1 (comC1) from Streptococcus pneumoniae.